A 430-amino-acid chain; its full sequence is Anaerobic glycerol-3-phosphate dehydrogenase subunit B (430 aa).

The protein belongs to the anaerobic G-3-P dehydrogenase subunit B family. In terms of assembly, composed of a catalytic GlpA/B dimer and of membrane bound GlpC. FMN serves as cofactor.

The catalysed reaction is a quinone + sn-glycerol 3-phosphate = dihydroxyacetone phosphate + a quinol. The protein operates within polyol metabolism; glycerol degradation via glycerol kinase pathway; glycerone phosphate from sn-glycerol 3-phosphate (anaerobic route): step 1/1. In terms of biological role, conversion of glycerol 3-phosphate to dihydroxyacetone. Uses fumarate or nitrate as electron acceptor. In Actinobacillus succinogenes (strain ATCC 55618 / DSM 22257 / CCUG 43843 / 130Z), this protein is Anaerobic glycerol-3-phosphate dehydrogenase subunit B.